Here is a 350-residue protein sequence, read N- to C-terminus: Outer membrane porin PhoE (350 aa).

The signal sequence occupies residues 1-21 (MKKSTLALVVMGVVASASVHA).

Belongs to the Gram-negative porin family. As to quaternary structure, homotrimer.

Its subcellular location is the cell outer membrane. Its function is as follows. Uptake of inorganic phosphate, phosphorylated compounds, and some other negatively charged solutes. The sequence is that of Outer membrane porin PhoE (phoE) from Enterobacter cloacae.